A 451-amino-acid chain; its full sequence is Tubulin alpha-1/alpha-2 chain (451 aa).

Residue Gln-11 participates in GTP binding. N6-acetyllysine is present on Lys-40. 6 residues coordinate GTP: Glu-71, Gly-144, Thr-145, Thr-179, Asn-206, and Asn-228. Glu-71 contributes to the Mg(2+) binding site. Glu-254 is a catalytic residue.

This sequence belongs to the tubulin family. In terms of assembly, dimer of alpha and beta chains. A typical microtubule is a hollow water-filled tube with an outer diameter of 25 nm and an inner diameter of 15 nM. Alpha-beta heterodimers associate head-to-tail to form protofilaments running lengthwise along the microtubule wall with the beta-tubulin subunit facing the microtubule plus end conferring a structural polarity. Microtubules usually have 13 protofilaments but different protofilament numbers can be found in some organisms and specialized cells. It depends on Mg(2+) as a cofactor. Post-translationally, undergoes a tyrosination/detyrosination cycle, the cyclic removal and re-addition of a C-terminal tyrosine residue by the enzymes tubulin tyrosine carboxypeptidase (TTCP) and tubulin tyrosine ligase (TTL), respectively. Acetylation of alpha chains at Lys-40 stabilizes microtubules and affects affinity and processivity of microtubule motors. This modification has a role in multiple cellular functions, ranging from cell motility, cell cycle progression or cell differentiation to intracellular trafficking and signaling.

The protein resides in the cytoplasm. It is found in the cytoskeleton. It carries out the reaction GTP + H2O = GDP + phosphate + H(+). Its function is as follows. Tubulin is the major constituent of microtubules, a cylinder consisting of laterally associated linear protofilaments composed of alpha- and beta-tubulin heterodimers. Microtubules grow by the addition of GTP-tubulin dimers to the microtubule end, where a stabilizing cap forms. Below the cap, tubulin dimers are in GDP-bound state, owing to GTPase activity of alpha-tubulin. This Volvox carteri (Green alga) protein is Tubulin alpha-1/alpha-2 chain (TUBA1).